A 255-amino-acid chain; its full sequence is Putative OPA3-like protein CG13603 (255 aa).

The stretch at 108–154 (KENKKNELAQSEKMELTNMLTEMNFRLERQDAQIREMTRVLADLDSR) forms a coiled coil. The disordered stretch occupies residues 168–187 (VPFDPDTPDQSASARNPKKF). Residues 212 to 241 (DGRNRKAKEALQHLDEVAVQLEQSLGEAAT) are a coiled coil.

The protein belongs to the OPA3 family.

The sequence is that of Putative OPA3-like protein CG13603 from Drosophila melanogaster (Fruit fly).